We begin with the raw amino-acid sequence, 37 residues long: Large ribosomal subunit protein bL36 (37 aa).

The protein belongs to the bacterial ribosomal protein bL36 family.

This chain is Large ribosomal subunit protein bL36, found in Koribacter versatilis (strain Ellin345).